The sequence spans 360 residues: MNAPLAGIWPWLPLLLTWLAPEVSSSWWYMRATGGSSRVMCDNVPGLVSRQRQLCHRHPDVMRAIGLGVAEWTAECQHQFRQHRWNCNTLDRDHSLFGRVLLRSSRESAFVYAISSAGVVFAITRACSQGELKSCSCDPKKKGTAKDSKGTFDWGGCSDNIDYGIRFARAFVDAKERKGKDARALMNLHNNRAGRKAVKRFLKQECKCHGVSGSCTLRTCWLAMADFRKTGDYLWRKYNGAIQVVMNQDGTGFTVANKRFKKPTKNDLVYFENSPDYCIRDRDAGSPGTAGRVCNLTSRGMDSCEVMCCGRGYDTSRITRMTKCECKFHWCCAVRCQDCLEALDVHTCKAPKSADWAAPT.

The first 25 residues, 1 to 25, serve as a signal peptide directing secretion; it reads MNAPLAGIWPWLPLLLTWLAPEVSS. 11 disulfide bridges follow: cysteine 76-cysteine 87, cysteine 127-cysteine 135, cysteine 137-cysteine 157, cysteine 206-cysteine 220, cysteine 208-cysteine 215, cysteine 278-cysteine 309, cysteine 294-cysteine 304, cysteine 308-cysteine 348, cysteine 324-cysteine 339, cysteine 326-cysteine 336, and cysteine 331-cysteine 332. Residue serine 212 is the site of O-palmitoleoyl serine; by PORCN attachment. N-linked (GlcNAc...) asparagine glycosylation is present at asparagine 295.

This sequence belongs to the Wnt family. In terms of processing, palmitoleoylation is required for efficient binding to frizzled receptors. Depalmitoleoylation leads to Wnt signaling pathway inhibition.

It localises to the secreted. The protein localises to the extracellular space. The protein resides in the extracellular matrix. Functionally, ligand for members of the frizzled family of seven transmembrane receptors. Functions in the canonical Wnt signaling pathway that results in activation of transcription factors of the TCF/LEF family. Functions as a upstream regulator of FGF10 expression. Plays an important role in embryonic lung development. May contribute to embryonic brain development by regulating the proliferation of dopaminergic precursors and neurons. This chain is Protein Wnt-2 (WNT2), found in Loxodonta africana (African elephant).